Consider the following 919-residue polypeptide: uncharacterized protein (919 aa).

Residues 1 to 15 (MEALILLSSQQSGSI) show a composition bias toward low complexity. 6 disordered regions span residues 1-167 (MEAL…DLEN), 179-312 (RFKP…STPS), 415-491 (HIYE…RLSL), 553-739 (QQQQ…TIKP), 751-863 (THNE…NNII), and 883-906 (LNINHQDGPNSASSTPRLPTDHIN). A compositionally biased stretch (polar residues) spans 16–25 (KNNCASTSDI). 3 stretches are compositionally biased toward low complexity: residues 34 to 75 (IVIV…SSSS), 96 to 107 (SSPSSSPNTPKT), and 141 to 153 (TPTTTSTSTTPIK). A compositionally biased stretch (basic and acidic residues) spans 154–167 (PVKDPKEKEKDLEN). The segment covering 186–292 (NNTNNNNNIN…QQSSPTSSQT (107 aa)) has biased composition (low complexity). Positions 420 to 433 (PNENNNGGSFQKPN) are enriched in polar residues. Low complexity-rich tracts occupy residues 450–471 (GVSGSPSHSPRVSQSPRVPSHP), 553–564 (QQQQQQQQQSSS), 573–589 (SQPQNSSSPRQPSQTPQ), and 618–635 (HMPQSPHMPHSPHLMPHS). A compositionally biased stretch (polar residues) spans 678-695 (YGSSPNLNGGKGSNNFLQ). The segment covering 712–723 (SSVDSYSNSSPT) has biased composition (low complexity). Residues 754 to 768 (ENYMSSPRQPLSPHN) show a composition bias toward polar residues. Residues 785-797 (PHEHCNYIDKNDE) show a composition bias toward basic and acidic residues. Positions 798–863 (YYSNNNNNNN…NNNNNNNNII (66 aa)) are enriched in low complexity. Polar residues predominate over residues 883 to 899 (LNINHQDGPNSASSTPR).

This is an uncharacterized protein from Dictyostelium discoideum (Social amoeba).